The chain runs to 137 residues: MGLLSEFKAFAVKGNVVDMAVGIIIGAAFGKIVSSFVGDVIMPPIGLLIGGVDFSDLAITLKAAEGDVPAVVLAYGKFIQTILDFVIVAFAIFMGVKAINRLKREEAVAPSEPPVPSAEETLLTEIRDLLKAQQNKP.

2 consecutive transmembrane segments (helical) span residues 9–29 and 79–99; these read AFAV…GAAF and IQTI…VKAI.

It belongs to the MscL family. Homopentamer.

It is found in the cell inner membrane. Channel that opens in response to stretch forces in the membrane lipid bilayer. May participate in the regulation of osmotic pressure changes within the cell. This chain is Large-conductance mechanosensitive channel, found in Pseudomonas paraeruginosa (strain DSM 24068 / PA7) (Pseudomonas aeruginosa (strain PA7)).